The sequence spans 214 residues: Ependymin (214 aa).

A signal peptide spans 1 to 20; the sequence is MHTVKLLCVVFSCLCAVAWA. 2 N-linked (GlcNAc...) asparagine glycosylation sites follow: N70 and N93.

The protein belongs to the ependymin family. Forms disulfide-linked dimers. Post-translationally, binds calcium through the terminal sialic acids.

The protein resides in the secreted. May play a role in neural plasticity. May be involved during axon regeneration. This is Ependymin (epd) from Notemigonus crysoleucas (Golden shiner).